The sequence spans 83 residues: UPF0297 protein LCK_00468 (83 aa).

The protein belongs to the UPF0297 family.

The sequence is that of UPF0297 protein LCK_00468 from Leuconostoc citreum (strain KM20).